A 218-amino-acid polypeptide reads, in one-letter code: Pyridoxine/pyridoxamine 5'-phosphate oxidase (218 aa).

Substrate-binding positions include 12–15 and Arg-70; that span reads RLSY. FMN-binding positions include 65 to 70, 80 to 81, Lys-87, and Gln-109; these read RTVLLR and YT. Substrate-binding residues include Tyr-127, Arg-131, and Ser-135. FMN contacts are provided by residues 145 to 146 and Trp-191; that span reads QS. 197-199 is a substrate binding site; that stretch reads RLH. Residue Arg-201 coordinates FMN.

Belongs to the pyridoxamine 5'-phosphate oxidase family. Homodimer. FMN is required as a cofactor.

It catalyses the reaction pyridoxamine 5'-phosphate + O2 + H2O = pyridoxal 5'-phosphate + H2O2 + NH4(+). The catalysed reaction is pyridoxine 5'-phosphate + O2 = pyridoxal 5'-phosphate + H2O2. The protein operates within cofactor metabolism; pyridoxal 5'-phosphate salvage; pyridoxal 5'-phosphate from pyridoxamine 5'-phosphate: step 1/1. It participates in cofactor metabolism; pyridoxal 5'-phosphate salvage; pyridoxal 5'-phosphate from pyridoxine 5'-phosphate: step 1/1. In terms of biological role, catalyzes the oxidation of either pyridoxine 5'-phosphate (PNP) or pyridoxamine 5'-phosphate (PMP) into pyridoxal 5'-phosphate (PLP). This is Pyridoxine/pyridoxamine 5'-phosphate oxidase from Acinetobacter baumannii (strain SDF).